Reading from the N-terminus, the 378-residue chain is 1-acyl-sn-glycerol-3-phosphate acyltransferase delta (378 aa).

A helical transmembrane segment spans residues 11–31 (FLCHLVFCYVFIASGLIINTI). The HXXXXD motif motif lies at 96-101 (HKFEID). Helical transmembrane passes span 125-145 (ELAYVPIIGWMWYFTEMVFCS), 307-327 (TLVNWLFWASLVLYPFFQFLV), and 338-358 (LASFILVFFVASVGVRWMIGV).

This sequence belongs to the 1-acyl-sn-glycerol-3-phosphate acyltransferase family.

Its subcellular location is the endoplasmic reticulum membrane. It catalyses the reaction a 1-acyl-sn-glycero-3-phosphate + an acyl-CoA = a 1,2-diacyl-sn-glycero-3-phosphate + CoA. The enzyme catalyses (4Z,7Z,10Z,13Z,16Z,19Z)-docosahexaenoyl-CoA + 1-hexadecanoyl-sn-glycero-3-phosphate = 1-hexadecanoyl-2-(4Z,7Z,10Z,13Z,16Z,19Z-docosahexaenoyl)-sn-glycero-3-phosphate + CoA. The catalysed reaction is 1-octadecanoyl-sn-glycero-3-phosphate + (9Z,12Z)-octadecadienoyl-CoA = 1-octadecanoyl-2-(9Z,12Z-octadecadienoyl)-sn-glycero-3-phosphate + CoA. It carries out the reaction 1-octadecanoyl-sn-glycero-3-phosphate + (4Z,7Z,10Z,13Z,16Z,19Z)-docosahexaenoyl-CoA = 1-octadecanoyl-2-(4Z,7Z,10Z,13Z,16Z,19Z-docosahexaenoyl)-sn-glycero-3-phosphate + CoA. It catalyses the reaction (4Z,7Z,10Z,13Z,16Z,19Z)-docosahexaenoyl-CoA + 1-(9Z-octadecenoyl)-sn-glycero-3-phosphate = 1-(9Z-octadecenoyl)-2-(4Z,7Z,10Z,13Z,16Z,19Z-docosahexaenoyl)-sn-glycero-3-phosphate + CoA. Its pathway is phospholipid metabolism; CDP-diacylglycerol biosynthesis; CDP-diacylglycerol from sn-glycerol 3-phosphate: step 2/3. In terms of biological role, converts 1-acyl-sn-glycerol-3-phosphate (lysophosphatidic acid or LPA) into 1,2-diacyl-sn-glycerol-3-phosphate (phosphatidic acid or PA) by incorporating an acyl moiety at the sn-2 position of the glycerol backbone. Exhibits high acyl-CoA specificity for polyunsaturated fatty acyl-CoA, especially docosahexaenoyl-CoA (22:6-CoA, DHA-CoA). This Pongo abelii (Sumatran orangutan) protein is 1-acyl-sn-glycerol-3-phosphate acyltransferase delta (AGPAT4).